Reading from the N-terminus, the 75-residue chain is Sec-independent protein translocase protein TatA (75 aa).

The helical transmembrane segment at M1–G21 threads the bilayer. A disordered region spans residues K44–S75.

It belongs to the TatA/E family. In terms of assembly, the Tat system comprises two distinct complexes: a TatABC complex, containing multiple copies of TatA, TatB and TatC subunits, and a separate TatA complex, containing only TatA subunits. Substrates initially bind to the TatABC complex, which probably triggers association of the separate TatA complex to form the active translocon.

The protein localises to the cell inner membrane. Functionally, part of the twin-arginine translocation (Tat) system that transports large folded proteins containing a characteristic twin-arginine motif in their signal peptide across membranes. TatA could form the protein-conducting channel of the Tat system. In Bordetella petrii (strain ATCC BAA-461 / DSM 12804 / CCUG 43448), this protein is Sec-independent protein translocase protein TatA.